The following is a 269-amino-acid chain: UPF0162 protein bbp_163 (269 aa).

This sequence belongs to the UPF0162 family.

This is UPF0162 protein bbp_163 from Buchnera aphidicola subsp. Baizongia pistaciae (strain Bp).